A 265-amino-acid polypeptide reads, in one-letter code: NAD-capped RNA hydrolase NudC (265 aa).

Residue arginine 76 coordinates substrate. Residues cysteine 106, cysteine 109, cysteine 124, and cysteine 127 each coordinate Zn(2+). A substrate-binding site is contributed by tyrosine 132. The 124-residue stretch at 133–256 (PRISPAMMVL…SIAHRLIRHA (124 aa)) folds into the Nudix hydrolase domain. Alanine 166, glutamate 182, and glutamate 186 together coordinate a divalent metal cation. Positions 167-188 (GFVEPGETLEECVHRETWEEVG) match the Nudix box motif. Residue 200-207 (QSWPFPHS) coordinates substrate. Glutamate 227 is a binding site for a divalent metal cation. A substrate-binding site is contributed by alanine 249.

The protein belongs to the Nudix hydrolase family. NudC subfamily. Homodimer. It depends on Mg(2+) as a cofactor. Requires Mn(2+) as cofactor. The cofactor is Zn(2+).

The enzyme catalyses a 5'-end NAD(+)-phospho-ribonucleoside in mRNA + H2O = a 5'-end phospho-adenosine-phospho-ribonucleoside in mRNA + beta-nicotinamide D-ribonucleotide + 2 H(+). It carries out the reaction NAD(+) + H2O = beta-nicotinamide D-ribonucleotide + AMP + 2 H(+). It catalyses the reaction NADH + H2O = reduced beta-nicotinamide D-ribonucleotide + AMP + 2 H(+). Its function is as follows. mRNA decapping enzyme that specifically removes the nicotinamide adenine dinucleotide (NAD) cap from a subset of mRNAs by hydrolyzing the diphosphate linkage to produce nicotinamide mononucleotide (NMN) and 5' monophosphate mRNA. The NAD-cap is present at the 5'-end of some mRNAs and stabilizes RNA against 5'-processing. Has preference for mRNAs with a 5'-end purine. Catalyzes the hydrolysis of a broad range of dinucleotide pyrophosphates. The sequence is that of NAD-capped RNA hydrolase NudC from Chromobacterium violaceum (strain ATCC 12472 / DSM 30191 / JCM 1249 / CCUG 213 / NBRC 12614 / NCIMB 9131 / NCTC 9757 / MK).